The chain runs to 247 residues: MPPKGWRKNTEGQYPQPNKDQDLVSIDEILFPRATVQKLAKNIMNASSDEGASNMILAKDSMIALQRSSTVFVSHLMFQARQISKDEGRKTINAQDILSALEKAEFSGFIPEVKQKLSVFESNIALRKKHKADKKVPKPEGVDASPSSKRLKDNDEQIIQRDNSADMEDDPEAEADEDITEELANDEDTNNKESKEEEEADEELDDEKDGEEVEENPIALLSREEDELRGEEAADEDEGQNSSDDDS.

The tract at residues 128–247 (KKHKADKKVP…EGQNSSDDDS (120 aa)) is disordered. Residues 150 to 159 (RLKDNDEQII) show a composition bias toward basic and acidic residues. Composition is skewed to acidic residues over residues 165–188 (ADME…NDED), 196–215 (EEEE…EVEE), and 224–247 (EEDE…DDDS).

As to quaternary structure, heterotetramer. Consists of four subunits: POL2, DPB2, DPB3 and DPB4.

The protein localises to the nucleus. In terms of biological role, as accessory component of the DNA polymerase epsilon (DNA polymerase II) participates in chromosomal DNA replication. The protein is DNA polymerase epsilon subunit D (DPB4) of Debaryomyces hansenii (strain ATCC 36239 / CBS 767 / BCRC 21394 / JCM 1990 / NBRC 0083 / IGC 2968) (Yeast).